A 968-amino-acid polypeptide reads, in one-letter code: Phosphatidylserine decarboxylase 2 proenzyme (968 aa).

The N-terminal stretch at 1–25 is a signal peptide; that stretch reads MAKVMRLIIFVCVALVAISVPAASS. Catalysis depends on charge relay system; for autoendoproteolytic cleavage activity residues D500, H570, and S683. The active-site Schiff-base intermediate with substrate; via pyruvic acid; for decarboxylase activity is the S683. Pyruvic acid (Ser); by autocatalysis is present on S683.

This sequence belongs to the phosphatidylserine decarboxylase family. In terms of assembly, heterodimer of a large membrane-associated beta subunit and a small pyruvoyl-containing alpha subunit. Requires pyruvate as cofactor. Post-translationally, is synthesized initially as an inactive proenzyme. Formation of the active enzyme involves a self-maturation process in which the active site pyruvoyl group is generated from an internal serine residue via an autocatalytic post-translational modification. Two non-identical subunits are generated from the proenzyme in this reaction, and the pyruvate is formed at the N-terminus of the alpha chain, which is derived from the carboxyl end of the proenzyme. The autoendoproteolytic cleavage occurs by a canonical serine protease mechanism, in which the side chain hydroxyl group of the serine supplies its oxygen atom to form the C-terminus of the beta chain, while the remainder of the serine residue undergoes an oxidative deamination to produce ammonia and the pyruvoyl prosthetic group on the alpha chain. During this reaction, the Ser that is part of the protease active site of the proenzyme becomes the pyruvoyl prosthetic group, which constitutes an essential element of the active site of the mature decarboxylase.

The protein resides in the parasitophorous vacuole. It is found in the cytoplasmic vesicle. Its subcellular location is the secretory vesicle. The enzyme catalyses a 1,2-diacyl-sn-glycero-3-phospho-L-serine + H(+) = a 1,2-diacyl-sn-glycero-3-phosphoethanolamine + CO2. The protein operates within phospholipid metabolism; phosphatidylethanolamine biosynthesis; phosphatidylethanolamine from CDP-diacylglycerol: step 2/2. Its function is as follows. Catalyzes the formation of phosphatidylethanolamine (PtdEtn) from phosphatidylserine (PtdSer). Plays a central role in phospholipid metabolism and in the interorganelle trafficking of phosphatidylserine. Can act on liposomal and host cell PtdSer. The protein is Phosphatidylserine decarboxylase 2 proenzyme of Toxoplasma gondii (strain ATCC 50853 / GT1).